Reading from the N-terminus, the 92-residue chain is Small ribosomal subunit protein bS16 (92 aa).

It belongs to the bacterial ribosomal protein bS16 family.

The protein is Small ribosomal subunit protein bS16 of Desulforudis audaxviator (strain MP104C).